The chain runs to 173 residues: Small ribosomal subunit protein uS11m (173 aa).

It belongs to the universal ribosomal protein uS11 family.

It localises to the mitochondrion. The polypeptide is Small ribosomal subunit protein uS11m (RPS11) (Acanthamoeba castellanii (Amoeba)).